Here is a 150-residue protein sequence, read N- to C-terminus: Ribosome-binding factor A (150 aa).

Residues Leu-131 to Glu-150 are disordered.

This sequence belongs to the RbfA family. Monomer. Binds 30S ribosomal subunits, but not 50S ribosomal subunits or 70S ribosomes.

It localises to the cytoplasm. In terms of biological role, one of several proteins that assist in the late maturation steps of the functional core of the 30S ribosomal subunit. Associates with free 30S ribosomal subunits (but not with 30S subunits that are part of 70S ribosomes or polysomes). Required for efficient processing of 16S rRNA. May interact with the 5'-terminal helix region of 16S rRNA. In Brucella melitensis biotype 2 (strain ATCC 23457), this protein is Ribosome-binding factor A.